A 121-amino-acid polypeptide reads, in one-letter code: MARIAGINIPPQQHAEIGLTAIFGIGRTRARKICEACDIAYSKKIKDLTDGDLEKIRDQIALFTIEGDLRRETTMNIKRLMDIGCYRGFRHRRGLPMRGQRTRTNARTRKGPRKAAAALKK.

The disordered stretch occupies residues 94-121; that stretch reads GLPMRGQRTRTNARTRKGPRKAAAALKK.

Belongs to the universal ribosomal protein uS13 family. As to quaternary structure, part of the 30S ribosomal subunit. Forms a loose heterodimer with protein S19. Forms two bridges to the 50S subunit in the 70S ribosome.

Its function is as follows. Located at the top of the head of the 30S subunit, it contacts several helices of the 16S rRNA. In the 70S ribosome it contacts the 23S rRNA (bridge B1a) and protein L5 of the 50S subunit (bridge B1b), connecting the 2 subunits; these bridges are implicated in subunit movement. Contacts the tRNAs in the A and P-sites. In Polaromonas sp. (strain JS666 / ATCC BAA-500), this protein is Small ribosomal subunit protein uS13.